The chain runs to 231 residues: Verlamelin biosynthesis protein B (231 aa).

It functions in the pathway secondary metabolite biosynthesis. Part of the gene cluster that mediates the biosynthesis of verlamelin, a lipopeptide that exhibits antifungal activity against plant pathogenic fungi. Verlamelin is a cyclic hexadepsipeptide and is bridged by ester bonding between a 5-hydroxytetradecanoic acid moiety and a carboxyl group on the terminal Val of amide-bonded tetradecanoyl-hexapeptide D-allo-Thr-D-Ala-L-Pro-L-Gln-D-Tyr-L-Val. VlmA and vlmB are altogether regarded as essential components in the biosynthesis of 5-hydroxytetradecanoic acid. VlmA catalyzes the hydroxylation at position C5 of tetradecanoic acid produced in primary metabolism, while the precise function of vlmB still remains to be solved. To be loaded onto the waiting NRPS, 5-hydroxytetradecanoic acid is activated in the form of acyladenylate by the AMP-dependent ligase vlmC. VlmS seems to accept the fatty-acyl intermediate onto the initial module to further elongate amino acid residues by the downstream modules. In addition, in the last module at its C-terminus, vlmS contains a surplus condensation (C) domain that may be involved in cyclization, the last step to form verlamelin. This chain is Verlamelin biosynthesis protein B, found in Lecanicillium sp.